A 612-amino-acid chain; its full sequence is Chloride intracellular channel protein 6 (612 aa).

The tract at residues 1 to 373 is disordered; that stretch reads MAEATEPKEV…NGPASEEGDL (373 aa). A compositionally biased stretch (basic and acidic residues) spans 34–51; it reads LEGREASEGAAEAPRDLG. Ser40 carries the post-translational modification Phosphoserine. Residues 84 to 96 are compositionally biased toward low complexity; the sequence is PGTETPGTSGAPG. Positions 120–129 are enriched in polar residues; sequence QQVQGTSSGL. The segment covering 140-153 has biased composition (basic and acidic residues); it reads EDARREPEDPKASE. Residues 208-223 show a composition bias toward low complexity; the sequence is SSPQPQDEAIEIAAAE. 2 stretches are compositionally biased toward basic and acidic residues: residues 240-264 and 275-303; these read AKGE…RVDS and EEAR…RPES. Phosphoserine occurs at positions 264, 303, and 321. Basic and acidic residues-rich tracts occupy residues 325–335 and 354–364; these read EEAKSTGHEES and ELGRVNGRREN. Ser368 bears the Phosphoserine mark. A G-site motif is present at residues 395 to 398; the sequence is CPFS. Residues 397-417 traverse the membrane as a helical segment; that stretch reads FSQRLFMILWLKGVIFNVTTV. The 172-residue stretch at 441-612 folds into the GST C-terminal domain; the sequence is DGEVKTDVNK…AYSDAAKRMK (172 aa).

Belongs to the chloride channel CLIC family. As to quaternary structure, monomer (soluble state). Interacts with dopamine receptors DRD2, DRD3 and DRD4. Post-translationally, phosphorylated. Predominantly expressed in brain, pituitary and stomach. In adult brain, it is restricted to the choroid plexus, the striatal proliferative subventricular zone and the cerebellum where it colocalizes with the D(3)R in the Purkinje cells of the lobules IX and X.

It is found in the cytoplasm. It localises to the cell membrane. The enzyme catalyses chloride(in) = chloride(out). Channel activity is redox- and pH-regulated. Inhibited by IAA-94. Functionally, in the soluble state, catalyzes glutaredoxin-like thiol disulfide exchange reactions with reduced glutathione as electron donor. Can insert into membranes and form voltage-dependent chloride-selective channels. The channel opens upon membrane depolarization at positive voltages and closes at negative membrane voltages. May play a critical role in water-secreting cells, possibly through the regulation of chloride ion transport. The chain is Chloride intracellular channel protein 6 (Clic6) from Rattus norvegicus (Rat).